We begin with the raw amino-acid sequence, 160 residues long: Putative pre-16S rRNA nuclease (160 aa).

The protein belongs to the YqgF nuclease family.

The protein localises to the cytoplasm. Its function is as follows. Could be a nuclease involved in processing of the 5'-end of pre-16S rRNA. This Jannaschia sp. (strain CCS1) protein is Putative pre-16S rRNA nuclease.